Here is a 239-residue protein sequence, read N- to C-terminus: Uridylate kinase (239 aa).

Lys-13–Gly-16 contacts ATP. Gly-55 contributes to the UMP binding site. ATP-binding residues include Gly-56 and Arg-60. UMP contacts are provided by residues Asp-75 and Thr-136–Thr-143. 3 residues coordinate ATP: Thr-163, Tyr-169, and Asp-172.

The protein belongs to the UMP kinase family. As to quaternary structure, homohexamer.

The protein resides in the cytoplasm. The enzyme catalyses UMP + ATP = UDP + ADP. It participates in pyrimidine metabolism; CTP biosynthesis via de novo pathway; UDP from UMP (UMPK route): step 1/1. With respect to regulation, inhibited by UTP. In terms of biological role, catalyzes the reversible phosphorylation of UMP to UDP. The sequence is that of Uridylate kinase from Chromobacterium violaceum (strain ATCC 12472 / DSM 30191 / JCM 1249 / CCUG 213 / NBRC 12614 / NCIMB 9131 / NCTC 9757 / MK).